Reading from the N-terminus, the 846-residue chain is Neurotactin (846 aa).

Residues Met-1–Arg-222 form a disordered region. Residues Met-1 to Asp-324 lie on the Cytoplasmic side of the membrane. The span at Pro-11–Glu-20 shows a compositional bias: low complexity. Residues Glu-23–Thr-42 are compositionally biased toward basic and acidic residues. A Phosphothreonine; by PKC modification is found at Thr-28. Thr-42 is modified (phosphothreonine). Ser-44 bears the Phosphoserine mark. A Phosphothreonine modification is found at Thr-47. Ser-48 and Ser-52 each carry phosphoserine. A compositionally biased stretch (basic and acidic residues) spans Ala-63 to Lys-74. Residue Ser-75 is modified to Phosphoserine; by PKC. Ser-77 is subject to Phosphoserine. Basic and acidic residues-rich tracts occupy residues Asp-95–Pro-111, Leu-141–Asn-155, Gly-163–Arg-178, and Pro-185–Ala-205. Residue Ser-103 is modified to Phosphoserine; by PKC. Ser-169 carries the phosphoserine; by PKC modification. 2 positions are modified to phosphoserine: Ser-186 and Ser-203. Thr-206 bears the Phosphothreonine mark. Position 256 is a phosphoserine (Ser-256). Position 259 is a phosphothreonine (Thr-259). Ser-263 is subject to Phosphoserine. Thr-269 is subject to Phosphothreonine. A helical; Signal-anchor for type II membrane protein transmembrane segment spans residues Ala-325–Thr-346. The Extracellular segment spans residues His-347–Asp-846. N-linked (GlcNAc...) asparagine glycans are attached at residues Asn-410, Asn-417, and Asn-428. 2 cysteine pairs are disulfide-bonded: Cys-422–Cys-437 and Cys-600–Cys-605. Asn-636, Asn-691, and Asn-720 each carry an N-linked (GlcNAc...) asparagine glycan. A disulfide bridge connects residues Cys-738 and Cys-830.

It in the C-terminal section; belongs to the type-B carboxylesterase/lipase family. In terms of tissue distribution, late in embryogenesis, expression is restricted to cells of the peripheral and central nervous system undergoing proliferation and differentiation. Also expressed in larval CNS, mesoderm and imaginal disks.

Its subcellular location is the membrane. In terms of biological role, may mediate or modulate cell adhesion between embryonic cells during development. This chain is Neurotactin (Nrt), found in Drosophila melanogaster (Fruit fly).